Consider the following 490-residue polypeptide: Membrane-bound lytic murein transglycosylase F (490 aa).

Residues 1–32 (MFALTAYRLRCAAWLLATGIFLLLAGCSEAKA) form the signal peptide. Positions 33–269 (PTALERVQKE…RLKDRYYGHV (237 aa)) are non-LT domain. The interval 270–490 (DVLGYVGAYT…PEEDSGDEKL (221 aa)) is LT domain. The active site involves E316. The tract at residues 467 to 490 (AESGLHLPGVNKTRPEEDSGDEKL) is disordered. A compositionally biased stretch (basic and acidic residues) spans 479–490 (TRPEEDSGDEKL).

The protein in the N-terminal section; belongs to the bacterial solute-binding protein 3 family. It in the C-terminal section; belongs to the transglycosylase Slt family.

It is found in the cell outer membrane. The enzyme catalyses Exolytic cleavage of the (1-&gt;4)-beta-glycosidic linkage between N-acetylmuramic acid (MurNAc) and N-acetylglucosamine (GlcNAc) residues in peptidoglycan, from either the reducing or the non-reducing ends of the peptidoglycan chains, with concomitant formation of a 1,6-anhydrobond in the MurNAc residue.. Functionally, murein-degrading enzyme that degrades murein glycan strands and insoluble, high-molecular weight murein sacculi, with the concomitant formation of a 1,6-anhydromuramoyl product. Lytic transglycosylases (LTs) play an integral role in the metabolism of the peptidoglycan (PG) sacculus. Their lytic action creates space within the PG sacculus to allow for its expansion as well as for the insertion of various structures such as secretion systems and flagella. The polypeptide is Membrane-bound lytic murein transglycosylase F (Pseudomonas aeruginosa (strain ATCC 15692 / DSM 22644 / CIP 104116 / JCM 14847 / LMG 12228 / 1C / PRS 101 / PAO1)).